The following is a 215-amino-acid chain: MAKPLTERFYQPKELKVMGRWSVEDVVVNDPSLRPYINLEPRILPHSHGRHAKKPFGKAQVHIVERLINKVMRSGASSHKVGGHFMRREHRSLMGKKMKAYEVVKEAFMIIERRTKQNPIQVFIRAIENSAPREDTTTIAFGGIRYHMAVDVSPLRRLDIALKNIALGASAKCYRNKTSYAQALAEEIIAAANKDPKSFAYSKKEEIERIAQSSR.

The protein belongs to the universal ribosomal protein uS7 family. As to quaternary structure, part of the 30S ribosomal subunit.

Functionally, one of the primary rRNA binding proteins, it binds directly to 16S rRNA where it nucleates assembly of the head domain of the 30S subunit. Is located at the subunit interface close to the decoding center. The chain is Small ribosomal subunit protein uS7 from Thermococcus onnurineus (strain NA1).